The chain runs to 1000 residues: Probable coatomer subunit beta' (1000 aa).

WD repeat units lie at residues 13 to 52 (ARSD…LVKS), 55 to 94 (VCDV…RVHQ), 97 to 136 (AHSD…AMKQ), 140 to 180 (GHTH…PNFT), 183 to 224 (GHEK…CVQT), 227 to 266 (GHAQ…LETT), and 351 to 391 (LGSS…NKDF). The interval 863–1000 (PRQTETQLKA…MDDLNLDEED (138 aa)) is disordered. Residues 901–915 (EPEEEEEQEEFDDDQ) show a composition bias toward acidic residues. The segment covering 960-969 (SASSQQSAQD) has biased composition (low complexity). Over residues 970 to 1000 (FQDDTQWSDEDFGDAENGDLNMDDLNLDEED) the composition is skewed to acidic residues.

Belongs to the WD repeat COPB2 family. As to quaternary structure, oligomeric complex that consists of at least the alpha, beta, beta', gamma, delta, epsilon and zeta subunits.

The protein localises to the cytoplasm. The protein resides in the golgi apparatus membrane. It localises to the cytoplasmic vesicle. It is found in the COPI-coated vesicle membrane. Its function is as follows. The coatomer is a cytosolic protein complex that binds to dilysine motifs and reversibly associates with Golgi non-clathrin-coated vesicles, which further mediate biosynthetic protein transport from the ER, via the Golgi up to the trans Golgi network. Coatomer complex is required for budding from Golgi membranes, and is essential for the retrograde Golgi-to-ER transport of dilysine-tagged proteins. In Caenorhabditis elegans, this protein is Probable coatomer subunit beta' (copb-2).